Here is a 244-residue protein sequence, read N- to C-terminus: Ras-like protein family member 11B (244 aa).

The interval P19–T242 is small GTPase-like. GTP contacts are provided by residues G30–T37, D77–V81, and N142–D145. Residues I200–N222 form a disordered region.

Belongs to the small GTPase superfamily. Ras family.

The enzyme catalyses GTP + H2O = GDP + phosphate + H(+). This chain is Ras-like protein family member 11B, found in Danio rerio (Zebrafish).